A 341-amino-acid polypeptide reads, in one-letter code: Adenosine deaminase (341 aa).

His-15 and His-17 together coordinate Zn(2+). His-17, Asp-19, and Gly-172 together coordinate substrate. His-199 contacts Zn(2+). Glu-202 functions as the Proton donor in the catalytic mechanism. Asp-279 contacts Zn(2+).

The protein belongs to the metallo-dependent hydrolases superfamily. Adenosine and AMP deaminases family. Adenosine deaminase subfamily. It depends on Zn(2+) as a cofactor.

It catalyses the reaction adenosine + H2O + H(+) = inosine + NH4(+). The enzyme catalyses 2'-deoxyadenosine + H2O + H(+) = 2'-deoxyinosine + NH4(+). Functionally, catalyzes the hydrolytic deamination of adenosine and 2-deoxyadenosine. The protein is Adenosine deaminase of Streptococcus equi subsp. zooepidemicus (strain MGCS10565).